We begin with the raw amino-acid sequence, 432 residues long: Nematocyst expressed protein 3-like (432 aa).

The N-terminal stretch at 1-19 is a signal peptide; sequence MRVVYLVLVVAVIIAITEA. 6 disulfides stabilise this stretch: Cys52-Cys91, Cys59-Cys84, Cys73-Cys88, Cys125-Cys140, Cys157-Cys176, and Cys166-Cys180. ShKT domains follow at residues 59-91, 107-143, and 149-183; these read CKAF…CKLC, VVRA…CMLC, and GPCD…CDVY. Positions 235–313 are enriched in low complexity; that stretch reads GAQYPAATAA…PEAAPSEPEA (79 aa). The tract at residues 235-432 is disordered; the sequence is GAQYPAATAA…KSKSGHKRHH (198 aa). Residues 314–330 are compositionally biased toward pro residues; the sequence is APAPAPEMAPAPAPEMA. Residues 331–408 show a composition bias toward low complexity; sequence PAPEAASAPA…AAPSEQPMPG (78 aa). Positions 409-432 are enriched in basic residues; it reads KKSKSKPSKRKGVKKSKSGHKRHH.

This sequence belongs to the NEP3 family. In terms of tissue distribution, nematocytes. In late planulae, transcripts are found throughout the ectoderm in nematocytes, with high concentration of expressing cells in the oral pole. In primary polyps, is expressed in nematocytes in the body wall and physa ectoderm and in the upper and lower pharynx.

Its subcellular location is the nematocyst. The protein resides in the secreted. Probable toxin. In Nematostella vectensis (Starlet sea anemone), this protein is Nematocyst expressed protein 3-like.